A 541-amino-acid polypeptide reads, in one-letter code: Phosphoenolpyruvate carboxykinase (ATP) (541 aa).

Arginine 67, tyrosine 207, and lysine 213 together coordinate substrate. Residues lysine 213, histidine 232, and 248–256 (GLSGTGKTT) contribute to the ATP site. Mn(2+)-binding residues include lysine 213 and histidine 232. A Mn(2+)-binding site is contributed by aspartate 269. Residues glutamate 297, arginine 333, 449-450 (RI), and threonine 455 contribute to the ATP site. Residue arginine 333 coordinates substrate.

It belongs to the phosphoenolpyruvate carboxykinase (ATP) family. As to quaternary structure, monomer. The cofactor is Mn(2+).

It is found in the cytoplasm. It carries out the reaction oxaloacetate + ATP = phosphoenolpyruvate + ADP + CO2. Its pathway is carbohydrate biosynthesis; gluconeogenesis. Functionally, involved in the gluconeogenesis. Catalyzes the conversion of oxaloacetate (OAA) to phosphoenolpyruvate (PEP) through direct phosphoryl transfer between the nucleoside triphosphate and OAA. This Aliivibrio salmonicida (strain LFI1238) (Vibrio salmonicida (strain LFI1238)) protein is Phosphoenolpyruvate carboxykinase (ATP).